Consider the following 342-residue polypeptide: L-lysine 2,3-aminomutase (342 aa).

The Radical SAM core domain occupies 106–329 (HKYHNRALLL…PKLAREIGGE (224 aa)). Positions 120, 124, and 127 each coordinate [4Fe-4S] cluster. At lysine 332 the chain carries N6-(pyridoxal phosphate)lysine.

Belongs to the radical SAM superfamily. KamA family. The cofactor is [4Fe-4S] cluster. It depends on pyridoxal 5'-phosphate as a cofactor.

It catalyses the reaction L-lysine = D-beta-lysine. Functionally, with EpmA is involved in the beta-lysylation step of the post-translational modification of translation elongation factor P (EF-P) on 'Lys-34'. EpmB appears to act before EpmA. Displays lysine 2,3-aminomutase activity, producing (R)-beta-lysine from (S)-alpha-lysine (L-lysine). Cannot use (S)-ornithine or (R)-alpha-lysine as a substrate. The sequence is that of L-lysine 2,3-aminomutase (epmB) from Escherichia coli (strain K12).